Reading from the N-terminus, the 373-residue chain is Opsin Rh1 (373 aa).

Over 1–49 (MESFAVAAAQLGPHFAPLSNGSVVDKVTPDMAHLISPYWNQFPAMDPIW) the chain is Extracellular. N20 carries N-linked (GlcNAc...) asparagine glycosylation. Residues 50-74 (AKILTAYMIMIGMISWCGNGVVIYI) form a helical membrane-spanning segment. Residues 75-86 (FATTKSLRTPAN) lie on the Cytoplasmic side of the membrane. Residues 87 to 112 (LLVINLAISDFGIMITNTPMMGINLY) traverse the membrane as a helical segment. Topologically, residues 113-126 (FETWVLGPMMCDIY) are extracellular. A disulfide bridge links C123 with C200. The chain crosses the membrane as a helical span at residues 127 to 146 (AGLGSAFGCSSIWSMCMISL). Residues 147–165 (DRYQVIVKGMAGRPMTIPL) are Cytoplasmic-facing. The chain crosses the membrane as a helical span at residues 166–189 (ALGKIAYIWFMSSIWCLAPAFGWS). Topologically, residues 190–213 (RYVPEGNLTSCGIDYLERDWNPRS) are extracellular. N196 carries an N-linked (GlcNAc...) asparagine glycan. Residues 214 to 241 (YLIFYSIFVYYIPLFLICYSYWFIIAAV) form a helical membrane-spanning segment. Residues 242-276 (SAHEKAMREQAKKMNVKSLRSSEDAEKSAEGKLAK) lie on the Cytoplasmic side of the membrane. The helical transmembrane segment at 277-300 (VALVTITLWFMAWTPYLVINCMGL) threads the bilayer. Residues 301-307 (FKFEGLT) lie on the Extracellular side of the membrane. A helical transmembrane segment spans residues 308-332 (PLNTIWGACFAKSAACYNPIVYGIS). An N6-(retinylidene)lysine modification is found at K319. At 333–373 (HPKYRLALKEKCPCCVFGKVDDGKSSDAQSQATASEAESKA) the chain is on the cytoplasmic side. A disordered region spans residues 354–373 (DGKSSDAQSQATASEAESKA). Residues 358 to 373 (SDAQSQATASEAESKA) show a composition bias toward low complexity.

The protein belongs to the G-protein coupled receptor 1 family. Opsin subfamily. Phosphorylated on some or all of the serine and threonine residues present in the C-terminal region.

It localises to the cell projection. The protein resides in the rhabdomere membrane. Its function is as follows. Visual pigments are the light-absorbing molecules that mediate vision. They consist of an apoprotein, opsin, covalently linked to cis-retinal. The sequence is that of Opsin Rh1 (ninaE) from Drosophila melanogaster (Fruit fly).